Consider the following 194-residue polypeptide: Ancillary SecYEG translocon subunit (194 aa).

At 1–10 the chain is on the cytoplasmic side; the sequence is MHLNKMKKVS. The helical transmembrane segment at 11 to 31 threads the bilayer; it reads LKTYLVLFFLIFFIFCSFWFI. At 32–194 the chain is on the periplasmic side; the sequence is KPKEKKLKLE…INMKINEIKR (163 aa).

Belongs to the YfgM family. Interacts with the SecYEG translocon. Forms a complex with PpiD.

The protein resides in the cell inner membrane. In terms of biological role, may mediate protein transfer from the SecYEG translocon to the periplasmic chaperone network via its periplasmic C-terminal region. The chain is Ancillary SecYEG translocon subunit from Buchnera aphidicola subsp. Schizaphis graminum (strain Sg).